The sequence spans 150 residues: Nucleoside diphosphate kinase (150 aa).

6 residues coordinate ATP: K9, F57, R85, T91, R102, and N112. The Pros-phosphohistidine intermediate role is filled by H115.

It belongs to the NDK family. Requires Mg(2+) as cofactor.

It is found in the cytoplasm. The enzyme catalyses a 2'-deoxyribonucleoside 5'-diphosphate + ATP = a 2'-deoxyribonucleoside 5'-triphosphate + ADP. It catalyses the reaction a ribonucleoside 5'-diphosphate + ATP = a ribonucleoside 5'-triphosphate + ADP. Functionally, major role in the synthesis of nucleoside triphosphates other than ATP. The ATP gamma phosphate is transferred to the NDP beta phosphate via a ping-pong mechanism, using a phosphorylated active-site intermediate. The polypeptide is Nucleoside diphosphate kinase (Methanoregula boonei (strain DSM 21154 / JCM 14090 / 6A8)).